Consider the following 300-residue polypeptide: HTH-type transcriptional regulator ArgP (300 aa).

Residues 4–60 (FDYKLLAALAAVVEQGGFERAAQALGLSQSAVSQRIKLLEARVGQPVLVRETPPHPT) enclose the HTH lysR-type domain. Positions 21 to 40 (FERAAQALGLSQSAVSQRIK) form a DNA-binding region, H-T-H motif.

This sequence belongs to the LysR transcriptional regulatory family. Homodimer.

In terms of biological role, controls the transcription of genes involved in arginine and lysine metabolism. In Pseudomonas aeruginosa (strain UCBPP-PA14), this protein is HTH-type transcriptional regulator ArgP.